The primary structure comprises 460 residues: Hydroxymethylglutaryl-CoA synthase erg13B (460 aa).

Catalysis depends on glutamate 86, which acts as the Proton donor/acceptor. Residue cysteine 120 is the Acyl-thioester intermediate of the active site. 7 residues coordinate (3S)-3-hydroxy-3-methylglutaryl-CoA: cysteine 120, threonine 162, serine 212, histidine 263, lysine 272, asparagine 340, and serine 374. Residue histidine 263 is the Proton donor/acceptor of the active site.

This sequence belongs to the thiolase-like superfamily. HMG-CoA synthase family.

It carries out the reaction acetoacetyl-CoA + acetyl-CoA + H2O = (3S)-3-hydroxy-3-methylglutaryl-CoA + CoA + H(+). Its pathway is metabolic intermediate biosynthesis; (R)-mevalonate biosynthesis; (R)-mevalonate from acetyl-CoA: step 2/3. In terms of biological role, hydroxymethylglutaryl-CoA synthase; part of the first module of ergosterol biosynthesis pathway that includes the early steps of the pathway, conserved across all eukaryotes, and which results in the formation of mevalonate from acetyl-coenzyme A (acetyl-CoA). Erg13A and erg13B condense acetyl-CoA with acetoacetyl-CoA to form hydroxymethylglutaryl-CoA (HMG-CoA). The first module starts with the action of the cytosolic acetyl-CoA acetyltransferase erg10B that catalyzes the formation of acetoacetyl-CoA. The hydroxymethylglutaryl-CoA synthases erg13A and erg13B then condense acetyl-CoA with acetoacetyl-CoA to form HMG-CoA. The rate-limiting step of the early module is the reduction to mevalonate by the 3-hydroxy-3-methylglutaryl-coenzyme A (HMG-CoA) reductases hmg1 and hmg2. Mevalonate is also a precursor for the extracellular siderophore triacetylfusarinine C (TAFC). The polypeptide is Hydroxymethylglutaryl-CoA synthase erg13B (Aspergillus fumigatus (strain ATCC MYA-4609 / CBS 101355 / FGSC A1100 / Af293) (Neosartorya fumigata)).